We begin with the raw amino-acid sequence, 378 residues long: Chaperone protein DnaJ (378 aa).

A J domain is found at 5-70; it reads DYYEVLGVAK…QKRAAYDQYG (66 aa). A CR-type zinc finger spans residues 138–216; sequence GYDTQIRVPS…CHGSGKVKET (79 aa). Positions 151, 154, 168, 171, 190, 193, 204, and 207 each coordinate Zn(2+). CXXCXGXG motif repeat units follow at residues 151–158, 168–175, 190–197, and 204–211; these read CEVCHGSG, CPTCHGQG, CPKCHGTG, and CVHCHGSG.

This sequence belongs to the DnaJ family. In terms of assembly, homodimer. It depends on Zn(2+) as a cofactor.

It is found in the cytoplasm. Participates actively in the response to hyperosmotic and heat shock by preventing the aggregation of stress-denatured proteins and by disaggregating proteins, also in an autonomous, DnaK-independent fashion. Unfolded proteins bind initially to DnaJ; upon interaction with the DnaJ-bound protein, DnaK hydrolyzes its bound ATP, resulting in the formation of a stable complex. GrpE releases ADP from DnaK; ATP binding to DnaK triggers the release of the substrate protein, thus completing the reaction cycle. Several rounds of ATP-dependent interactions between DnaJ, DnaK and GrpE are required for fully efficient folding. Also involved, together with DnaK and GrpE, in the DNA replication of plasmids through activation of initiation proteins. The sequence is that of Chaperone protein DnaJ from Burkholderia lata (strain ATCC 17760 / DSM 23089 / LMG 22485 / NCIMB 9086 / R18194 / 383).